The primary structure comprises 333 residues: MKGKFLKVSSLFVATLTTATLVSSPAANALSSKAMDNHPQQSQSSKQQTPKIQKGGNLKPLEQREHANVILPNNDRHQITDTTNGHYAPVTYIQVEAPTGTFIASGVVVGKDTLLTNKHVVDATHGDPHALKAFPSAINQDNYPNGGFTAEQITKYSGEGDLAIVKFSPNEQNKHIGEVVKPATMSNNAETQVNQNITVTGYPGDKPVATMWESKGKITYLKGEAMQYDLSTTGGNSGSPVFNEKNEVIGIHWGGVPNEFNGAVFINENVRNFLKQNIEDIHFANDDQPNNPDNPDNPNNPDNPNNPDNPNNPNNPDNPDNGDNNNSDNPDAA.

The N-terminal stretch at Met1–Ala29 is a signal peptide. The propeptide occupies Leu30–Asn68. Positions Lys33–Leu61 are disordered. The span at Gln40–Lys54 shows a compositional bias: low complexity. Catalysis depends on charge relay system residues His119, Asp161, and Ser237. The disordered stretch occupies residues Phe283–Ala333. Residues Asp286–Ala333 show a composition bias toward low complexity. 11 repeat units span residues Pro289–Asn291, Pro292–Asn294, Pro295–Asn297, Pro298–Asn300, Pro301–Asn303, Pro304–Asn306, Pro307–Asn309, Pro310–Asn312, Pro313–Asn315, Pro316–Asn318, and Pro319–Asn321. Positions Pro289 to Asn321 are 11 X 3 AA repeats of P-[DN]-N.

Belongs to the peptidase S1B family. Post-translationally, proteolytically cleaved by aureolysin (aur). This cleavage leads to the activation of SspA.

Its subcellular location is the secreted. The enzyme catalyses Preferential cleavage: Glu-|-Xaa, Asp-|-Xaa.. In terms of biological role, preferentially cleaves peptide bonds on the carboxyl-terminal side of aspartate and glutamate. Along with other extracellular proteases it is involved in colonization and infection of human tissues. Required for proteolytic maturation of thiol protease SspB and inactivation of SspC, an inhibitor of SspB. It is the most important protease for degradation of fibronectin-binding protein (FnBP) and surface protein A, which are involved in adherence to host cells. May also protect bacteria against host defense mechanism by cleaving the immunoglobulin classes IgG, IgA and IgM. May be involved in the stability of secreted lipases. In Staphylococcus aureus (strain MSSA476), this protein is Glutamyl endopeptidase (sspA).